The chain runs to 414 residues: MTLRKRSAQTKMWESPVVSQGKPSLLELPLKESLPKDSGLKAVPSTHTLYVGHLNPQFSVPVLACLLRDTLERLELPVAREQIEVVRRPRNTYALVQVAAPKAVLASLPWRLQMALEEQLILKELTARGKELVLSEGLESLHHREQDDSGPSPSHSPGPSPGPSPGPSPGFRRPPLPQLADPPPNWGSAGRRQISQNRPSGVRSDSAIVHQKILGQEQLFQGAFLGSETRNMEFKRGGGEYLSLAFKHHVRRYVCAFLNSEGGSLLVGVEDSGLVQGIHCSHRDEDRTRLLVDSILQGFKPQVFPDAYTLTFIPVISTTMTSVPLKVLRLTVHTPKAQGEPQLYETDQGEVFLRRDGSIQGPLSVGAIQDWCRQKWTAELSKLEEKVDVLTLEKEQLQEQLRQRQTLSCSCCVL.

Residues 141-203 are disordered; it reads LHHREQDDSG…ISQNRPSGVR (63 aa). Over residues 154 to 185 the composition is skewed to pro residues; the sequence is SHSPGPSPGPSPGPSPGFRRPPLPQLADPPPN. 268-275 contacts ATP; that stretch reads GVEDSGLV. Positions 373–407 form a coiled coil; the sequence is RQKWTAELSKLEEKVDVLTLEKEQLQEQLRQRQTL.

The protein belongs to the Schlafen family. Subgroup I subfamily.

The polypeptide is Schlafen-like protein 1 (Slfnl1) (Rattus norvegicus (Rat)).